The sequence spans 666 residues: MCLNTLCAILCFVLTVSFGFVSAQKCGESVFFRPNGNYDTNRRLVLSTLASNVSSQNNRFYNVSVGEGAGRIYALGLCIPGSDPRVCSDCIQLASQGLLQTCPNQTDSFYWTGDNADKTLCFVRYSNNSFFNKMALEPTHAVYNTMRFQGNLTAYTRTWDAFMNFMFTRVGQTRYLADISPRINQEPLSPDLIYALMQCIPGISSEDCETCLGKCVDDYQSCCNGFIGGVVNKPVCYFRWDGYKYYGAFGDEAPSQPPTPLPLPPPPPRDPDGKKISTGVIVAIVVSAVIFVVLVALGLVIWKRRQSYKTLKYHTDDDMTSPQSLQFDFTTIEVATDNFSRNNKLGQGGFGEVYKGMLPNETEIAVKRLSSNSGQGTQEFKNEVVIVAKLQHKNLVRLLGFCIERDEQILVYEFVSNKSLDYFLFDPKMKSQLDWKRRYNIIGGVTRGLLYLHQDSRLTIIHRDIKASNILLDADMNPKIADFGMARNFRVDQTEDQTGRVVGTFGYMPPEYVTHGQFSTKSDVYSFGVLILEIVCGKKNSSFFQMDDSGGNLVTHVWRLWNNDSPLDLIDPAIKESYDNDEVIRCIHIGILCVQETPADRPEMSTIFQMLTNSSITLPVPRPPGFFFRNRPNLDPLTYGSEQGQSSSMSVPFSIDSASITRATPR.

An N-terminal signal peptide occupies residues 1–23; sequence MCLNTLCAILCFVLTVSFGFVSA. Gnk2-homologous domains are found at residues 24-130 and 136-245; these read QKCG…NNSF and LEPT…GYKY. The Extracellular segment spans residues 24–280; that stretch reads QKCGESVFFR…PDGKKISTGV (257 aa). Asparagine 52, asparagine 62, asparagine 104, asparagine 127, and asparagine 151 each carry an N-linked (GlcNAc...) asparagine glycan. The chain crosses the membrane as a helical span at residues 281 to 301; the sequence is IVAIVVSAVIFVVLVALGLVI. The Cytoplasmic portion of the chain corresponds to 302-666; sequence WKRRQSYKTL…SASITRATPR (365 aa). Positions 339-616 constitute a Protein kinase domain; that stretch reads FSRNNKLGQG…IFQMLTNSSI (278 aa). Residues 345-353 and lysine 367 contribute to the ATP site; that span reads LGQGGFGEV. At tyrosine 412 the chain carries Phosphotyrosine. The Proton acceptor role is filled by aspartate 464. Residue serine 468 is modified to Phosphoserine. The residue at position 504 (threonine 504) is a Phosphothreonine. At tyrosine 512 the chain carries Phosphotyrosine.

It belongs to the protein kinase superfamily. Ser/Thr protein kinase family. CRK subfamily.

It localises to the membrane. The catalysed reaction is L-seryl-[protein] + ATP = O-phospho-L-seryl-[protein] + ADP + H(+). The enzyme catalyses L-threonyl-[protein] + ATP = O-phospho-L-threonyl-[protein] + ADP + H(+). This is Putative cysteine-rich receptor-like protein kinase 31 (CRK31) from Arabidopsis thaliana (Mouse-ear cress).